Reading from the N-terminus, the 955-residue chain is 2-oxoglutarate dehydrogenase E1 component (955 aa).

Belongs to the alpha-ketoglutarate dehydrogenase family. Homodimer. Part of the 2-oxoglutarate dehydrogenase (OGDH) complex composed of E1 (2-oxoglutarate dehydrogenase), E2 (dihydrolipoamide succinyltransferase) and E3 (dihydrolipoamide dehydrogenase); the complex contains multiple copies of the three enzymatic components (E1, E2 and E3). Thiamine diphosphate serves as cofactor.

It catalyses the reaction N(6)-[(R)-lipoyl]-L-lysyl-[protein] + 2-oxoglutarate + H(+) = N(6)-[(R)-S(8)-succinyldihydrolipoyl]-L-lysyl-[protein] + CO2. Functionally, E1 component of the 2-oxoglutarate dehydrogenase (OGDH) complex which catalyzes the decarboxylation of 2-oxoglutarate, the first step in the conversion of 2-oxoglutarate to succinyl-CoA and CO(2). The polypeptide is 2-oxoglutarate dehydrogenase E1 component (Bacillus mycoides (strain KBAB4) (Bacillus weihenstephanensis)).